The primary structure comprises 375 residues: Probable L-tyrosine/L-aspartate decarboxylase (375 aa).

Position 226 is an N6-(pyridoxal phosphate)lysine (Lys-226).

The protein belongs to the group II decarboxylase family. MfnA subfamily. The cofactor is pyridoxal 5'-phosphate.

It carries out the reaction L-tyrosine + H(+) = tyramine + CO2. The catalysed reaction is L-aspartate + H(+) = beta-alanine + CO2. It participates in cofactor biosynthesis; methanofuran biosynthesis. Its pathway is cofactor biosynthesis; coenzyme A biosynthesis. In terms of biological role, catalyzes the decarboxylation of L-tyrosine to produce tyramine for methanofuran biosynthesis. Can also catalyze the decarboxylation of L-aspartate to produce beta-alanine for coenzyme A (CoA) biosynthesis. This chain is Probable L-tyrosine/L-aspartate decarboxylase, found in Methanocella arvoryzae (strain DSM 22066 / NBRC 105507 / MRE50).